A 277-amino-acid polypeptide reads, in one-letter code: MSALEWFAHKPLGSGIFWIQERFYESGNRANIWLVRGSQRDLVIDAGLGLRSLPDYLRAAGLLAPPDGAGPRPLLAVATHVHFDHSGGLQHFEEVAVHSAEAAALLRGDNYEAVTWLSDREVTRPPRPGWRARHFCVPPVRPSRLLQEGDVISLGDRQLTVMHMPGHSRGSICLHDREHKILFSGDVVYDGSMIDWLPYSNVSDYVVSCQRLMELVDRGLVEKVLPGHFNMFGAERLYRLASNYISKAGICHKVSTCAMRSIASIALHLTNSRGTSS.

The Zn(2+) site is built by histidine 80, histidine 82, aspartate 84, histidine 85, histidine 167, aspartate 186, and histidine 228.

Belongs to the metallo-beta-lactamase superfamily. Glyoxalase II family. The cofactor is Zn(2+).

Its subcellular location is the endoplasmic reticulum membrane. The protein localises to the cell membrane. The enzyme catalyses hexadecanoyl-CoA + H2O = hexadecanoate + CoA + H(+). It catalyses the reaction dodecanoyl-CoA + H2O = dodecanoate + CoA + H(+). The catalysed reaction is tetradecanoyl-CoA + H2O = tetradecanoate + CoA + H(+). It carries out the reaction octadecanoyl-CoA + H2O = octadecanoate + CoA + H(+). The enzyme catalyses a beta-lactam + H2O = a substituted beta-amino acid. Its function is as follows. Acyl-CoA thioesterases are a group of enzymes that catalyze the hydrolysis of acyl-CoAs to the free fatty acid and coenzyme A (CoASH), providing the potential to regulate intracellular levels of acyl-CoAs, free fatty acids and CoASH. Has an acyl-CoA thioesterase activity towards the long chain fatty acyl-CoA thioester palmitoyl-CoA (hexadecanoyl-CoA; C16:0-CoA). Displays a substrate preference for fatty acyl-CoAs with chain-lengths C12-C18. The polypeptide is Acyl-coenzyme A thioesterase MBLAC2 (MBLAC2) (Gallus gallus (Chicken)).